A 113-amino-acid chain; its full sequence is U11-theraphotoxin-Hhn1a (113 aa).

A signal peptide spans 1-21; that stretch reads MNTVRVTFLLVFVLAVSLGQA. A propeptide spanning residues 22–74 is cleaved from the precursor; sequence DKDENRMEMQEKTEQGKSYLDFAENLLLQKLEELEAKLPEEDSEESRNSRQKR. The segment covering 58–69 has biased composition (basic and acidic residues); the sequence is KLPEEDSEESRN. Residues 58–82 are disordered; that stretch reads KLPEEDSEESRNSRQKRCIGEGVPC. 3 cysteine pairs are disulfide-bonded: Cys-75/Cys-90, Cys-82/Cys-95, and Cys-89/Cys-110.

This sequence belongs to the neurotoxin 14 (magi-1) family. 01 (HNTX-16) subfamily. Expressed by the venom gland.

The protein resides in the secreted. In terms of biological role, probable ion channel inhibitor. This Cyriopagopus hainanus (Chinese bird spider) protein is U11-theraphotoxin-Hhn1a.